Consider the following 341-residue polypeptide: Mitochondrial dimethyladenosine transferase 1 (341 aa).

Residues methionine 1 to leucine 27 constitute a mitochondrion transit peptide. S-adenosyl-L-methionine contacts are provided by leucine 38, glycine 63, glutamate 85, lysine 86, aspartate 111, valine 112, and asparagine 141.

This sequence belongs to the class I-like SAM-binding methyltransferase superfamily. rRNA adenine N(6)-methyltransferase family. KsgA subfamily. Interacts with mitochondrial RNA polymerase POLRMT. Interacts with TFAM. Bound to the maturing mtSSU until the late stages of assembly.

It localises to the mitochondrion. The enzyme catalyses adenosine(N)/adenosine(N+1) in rRNA + 4 S-adenosyl-L-methionine = N(6)-dimethyladenosine(N)/N(6)-dimethyladenosine(N+1) in rRNA + 4 S-adenosyl-L-homocysteine + 4 H(+). Mitochondrial methyltransferase which uses S-adenosyl methionine to dimethylate two highly conserved adjacent adenosine residues (A1583 and A1584) within the loop of helix 45 at the 3-prime end of 12S rRNA, thereby regulating the assembly or stability of the small subunit of the mitochondrial ribosome. Also required for basal transcription of mitochondrial DNA, probably via its interaction with POLRMT and TFAM. Stimulates transcription independently of the methyltransferase activity. The sequence is that of Mitochondrial dimethyladenosine transferase 1 (TFB1M) from Bos taurus (Bovine).